Reading from the N-terminus, the 326-residue chain is UDP-N-acetylglucosamine transporter (326 aa).

8 helical membrane passes run 4–24 (NLKY…VLTM), 38–58 (LSST…IFLV), 136–156 (LGMY…FVQW), 174–194 (FVGL…GVYF), 212–232 (LGFF…GELV), 243–263 (QLTW…AAVI), 269–289 (ILKG…SYFW), and 293–313 (FVPT…TFLY).

It belongs to the nucleotide-sugar transporter family. SLC35A subfamily. In terms of assembly, interacts with SLC35A2; the interaction is reduced in the presence of SLC35A4. Found in a complex with SLC35A2 and SLC35A4. Interacts with MGAT4B. In terms of processing, O-Glcnacylation regulates the stability of SLC35A3 and the specific complex formation with MGAT4B.

It is found in the golgi apparatus membrane. It catalyses the reaction UMP(out) + UDP-N-acetyl-alpha-D-glucosamine(in) = UMP(in) + UDP-N-acetyl-alpha-D-glucosamine(out). In terms of biological role, transports diphosphate-N-acetylglucosamine (UDP-GlcNAc) from the cytosol into the lumen of the Golgi apparatus, functioning as an antiporter that exchanges UDP-N-acetyl-alpha-D-glucosamine for UMP. May supply UDP-GlcNAc as substrate for Golgi-resident glycosyltransferases that generate highly branched, multiantennary complex N-glycans and keratan sulfate. However, the exact role of SLC35A3 still needs to be elucidated, it could be a member of a catalytically more efficient multiprotein complex rather than function independently as a single transporter. The polypeptide is UDP-N-acetylglucosamine transporter (Slc35a3) (Rattus norvegicus (Rat)).